Here is a 305-residue protein sequence, read N- to C-terminus: Axin interactor, dorsalization-associated protein A (305 aa).

The tract at residues 153-220 (GTLLPRLPSE…RKEDTYVHFN (68 aa)) is axin-binding. In terms of domain architecture, C2 Aida-type spans 156 to 303 (LPRLPSEPGM…LYLHLLQTLL (148 aa)).

This sequence belongs to the AIDA family.

Acts as a ventralizing factor during embryogenesis. Inhibits axin-mediated JNK activation by binding axin and disrupting axin homodimerization. This in turn antagonizes a Wnt/beta-catenin-independent dorsalization pathway activated by axin/JNK-signaling. The chain is Axin interactor, dorsalization-associated protein A (aida-a) from Xenopus laevis (African clawed frog).